The chain runs to 920 residues: MPLKKLESSNNQAIIAEEVALLKEMLENITRRMIGDDAFTVIESIMVLSEKQDYIELEKVVANISNQEMEVISRYFSILPLLINISEDVDLAYEINYQNNTDTDYLGKLALTIKDLAGKDNGKDILEQVNVVPVLTAHPTQVQRKTILELTTHIHKLLRKYRDAKAGVISLEKWRQELYRYIEMIMQTDIIREKKLQVKNEIKNVMQYYDGSLIQAVTKLTTEYKNLAQKHGLELDNPKPITMGMWIGGDRDGNPFVTAETLCLSATVQSEVILNYYIDKLAALYRTFSLSSTLVQPNSEVERLASLSQDQSIYRGNEPYRRAFHYIQSRLKQTQIQLTNQPAARMSSSVGLSTSAWSSPASLENPILAYDSPVDFKADLKAIEQSLLDNGNSALIEGDLREVMQAVDIFGFFLASIDMRQDSSVQEACVAELLKGANIVDDYSSLSETEKCDVLVQQLMEEPRTLSSAAVAKSDLLEKELAIYTTARELKDKLGEEVIKQHIISHTESVSDMFELAIMLKEVGLVDQQRARVQIVPLFETIEDLDNARDIMAAYLSHDIVKSWIATNRNYQEIMLGYSDSNKDGGYLASGWTLYKAQNELTAIGEEHGVKITFFHGRGGTVGRGGGPSYDAITSQPFGSIKDRIRLTEQGEIIENKYGNKDVAYYHLEMLISASINRMVTQMITDPNEIDSFREIMDSIVADSNIIYRKLVFDNPHFYDYFFEASPIKEVSSLNIGSRPAARKTITEITGLRAIPWVFSWSQNRIMFPGWYGVGSAFKRYIDRAQGNLERLQHMYQTWPFFHSLLSNVDMVLSKSNMNIAFQYAQLAESQDVRDVFYEILDEWQLTKNVILAIQDHDDLLEDNPSLKHSLKSRLPYFNVLNYIQIELIKRWRNNQLDENDEKLIHTTINGIATGLRNSG.

Active-site residues include H138 and K583.

Belongs to the PEPCase type 1 family. It depends on Mg(2+) as a cofactor.

It carries out the reaction oxaloacetate + phosphate = phosphoenolpyruvate + hydrogencarbonate. Forms oxaloacetate, a four-carbon dicarboxylic acid source for the tricarboxylic acid cycle. The protein is Phosphoenolpyruvate carboxylase of Streptococcus pyogenes serotype M5 (strain Manfredo).